The following is a 149-amino-acid chain: Probable glycine cleavage system H protein 2 (149 aa).

The 83-residue stretch at 32–114 (IAVVGITDLA…YGQGWIAKIK (83 aa)) folds into the Lipoyl-binding domain. K73 is subject to N6-lipoyllysine.

This sequence belongs to the GcvH family. As to quaternary structure, the glycine cleavage system is composed of four proteins: P, T, L and H. The cofactor is (R)-lipoate.

In terms of biological role, the glycine cleavage system catalyzes the degradation of glycine. The H protein shuttles the methylamine group of glycine from the P protein to the T protein. The protein is Probable glycine cleavage system H protein 2 of Sulfolobus acidocaldarius (strain ATCC 33909 / DSM 639 / JCM 8929 / NBRC 15157 / NCIMB 11770).